Consider the following 373-residue polypeptide: SAM domain-containing protein SAMSN-1 (373 aa).

The interval 1–72 (MLKRKPSNVS…GGGLGKKMRA (72 aa)) is disordered. The short motif at 20–25 (RSSSFG) is the Important for interaction with 14-3-3 proteins element. Ser-23 and Ser-34 each carry phosphoserine. A compositionally biased stretch (basic and acidic residues) spans 37 to 48 (KPDDSTEAHEGD). The span at 50–61 (TNGSGEQSKTSN) shows a compositional bias: polar residues. Position 74 is a phosphoserine (Ser-74). Thr-76 carries the phosphothreonine modification. Ser-90 and Ser-119 each carry phosphoserine. The disordered stretch occupies residues 91–153 (EEKDEEDGEN…DGTSNRDSFR (63 aa)). Residues 123 to 146 (SDSMDSLYSGQSSSSGITSCSDGT) show a composition bias toward low complexity. At Tyr-160 the chain carries Phosphotyrosine. In terms of domain architecture, SH3 spans 163–224 (PFCGRARVHT…KFIYVDVISE (62 aa)). Positions 241-305 (KKSKTLQEFL…LSAAENFLEE (65 aa)) constitute an SAM domain. The interval 337–359 (DSGCYISSGNSDNGKEDLESENL) is disordered.

As to quaternary structure, interacts with FASLG. Interacts with phosphotyrosine containing proteins. Interacts (via SH3 domain) with CTTN. Interacts (phosphorylated at Ser-23) with YWHAB, YWHAE, YWHAG, YWHAH, YWHAZ and SFN. Interacts directly with SAP30 and HDAC1. Identified in a complex with SAP30 and HDAC1. As to expression, detected in peripheral blood B-cells (at protein level). Detected in spleen, liver and peripheral blood.

It is found in the nucleus. The protein localises to the cytoplasm. Its subcellular location is the cell projection. The protein resides in the ruffle. Negative regulator of B-cell activation. Down-regulates cell proliferation (in vitro). Promotes RAC1-dependent membrane ruffle formation and reorganization of the actin cytoskeleton. Regulates cell spreading and cell polarization. Stimulates HDAC1 activity. Regulates LYN activity by modulating its tyrosine phosphorylation. In Homo sapiens (Human), this protein is SAM domain-containing protein SAMSN-1 (SAMSN1).